The following is a 396-amino-acid chain: tRNA-specific 2-thiouridylase MnmA (396 aa).

ATP is bound by residues 42–49 (GMSGGVDS) and M68. Residues 128–130 (NPD) are interaction with target base in tRNA. The active-site Nucleophile is the C133. C133 and C230 are joined by a disulfide. Residue G158 participates in ATP binding. Residues 180–182 (KDQ) are interaction with tRNA. The Cysteine persulfide intermediate role is filled by C230. An interaction with tRNA region spans residues 342–343 (RY).

It belongs to the MnmA/TRMU family.

It is found in the cytoplasm. It carries out the reaction S-sulfanyl-L-cysteinyl-[protein] + uridine(34) in tRNA + AH2 + ATP = 2-thiouridine(34) in tRNA + L-cysteinyl-[protein] + A + AMP + diphosphate + H(+). Functionally, catalyzes the 2-thiolation of uridine at the wobble position (U34) of tRNA, leading to the formation of s(2)U34. This is tRNA-specific 2-thiouridylase MnmA from Pseudoalteromonas atlantica (strain T6c / ATCC BAA-1087).